A 141-amino-acid chain; its full sequence is Large ribosomal subunit protein uL11 (141 aa).

It belongs to the universal ribosomal protein uL11 family. As to quaternary structure, part of the ribosomal stalk of the 50S ribosomal subunit. Interacts with L10 and the large rRNA to form the base of the stalk. L10 forms an elongated spine to which L12 dimers bind in a sequential fashion forming a multimeric L10(L12)X complex. One or more lysine residues are methylated.

In terms of biological role, forms part of the ribosomal stalk which helps the ribosome interact with GTP-bound translation factors. This is Large ribosomal subunit protein uL11 from Natranaerobius thermophilus (strain ATCC BAA-1301 / DSM 18059 / JW/NM-WN-LF).